Reading from the N-terminus, the 899-residue chain is Nuclear factor NF-kappa-B p100 subunit (899 aa).

Ser-23 and Ser-161 each carry phosphoserine. The region spanning 35–224 is the RHD domain; it reads ADGPYLVIVE…QPIHDSKSPG (190 aa). A Nuclear localization signal motif is present at residues 337–341; the sequence is RKRRK. Positions 346-377 are GRR; sequence FSQPFGGGSHMGGGSGGSAGGYGGAGGGGSLG. Positions 403–434 are disordered; sequence GGAQMAGSRRDTDAGEGAEEPRTPPEAPQGEP. Residues 410–425 are compositionally biased toward basic and acidic residues; sequence SRRDTDAGEGAEEPRT. Position 425 is a phosphothreonine (Thr-425). ANK repeat units lie at residues 487-516, 526-555, 559-590, 599-628, 633-663, and 667-696; these read NGDT…HAQY, LHQT…DPTL, HGDS…HAVP, EGLY…EVEA, GGRT…NVNA, and AGNT…DIHA. The segment at 698-734 is disordered; it reads NEEPLCPLPSPSTSGSDSDSEGPERDTQRNFRGHTPL. Ser-713, Ser-715, and Ser-717 each carry phosphoserine. The ANK 7 repeat unit spans residues 729–755; it reads RGHTPLDLTCSTKVKTLLLNAAQNTTE. Residues 764–851 form the Death domain; sequence AGPGLSLGDA…EGVRLLKGPE (88 aa). Ser-812 carries the post-translational modification Phosphoserine. Over residues 851–865 the composition is skewed to basic and acidic residues; the sequence is ETRDKLPSTEVKEDS. Residues 851 to 899 are disordered; sequence ETRDKLPSTEVKEDSAYGSQSVEQEAEKLCPPPEPPGGLCHGHPQPQVH. Lys-855 is covalently cross-linked (Glycyl lysine isopeptide (Lys-Gly) (interchain with G-Cter in ubiquitin)). Phosphoserine; by MAP3K14 is present on residues Ser-865 and Ser-869. Over residues 887 to 899 the composition is skewed to low complexity; that stretch reads GGLCHGHPQPQVH.

Component of the NF-kappa-B RelB-p52 complex. Homodimer; component of the NF-kappa-B p52-p52 complex. Component of the NF-kappa-B p65-p52 complex. Component of the NF-kappa-B p52-c-Rel complex. NFKB2/p52 interacts with NFKBIE. Component of a complex consisting of the NF-kappa-B p50-p50 homodimer and BCL3. Directly interacts with MEN1. In terms of processing, while translation occurs, the particular unfolded structure after the GRR repeat promotes the generation of p52 making it an acceptable substrate for the proteasome. This process is known as cotranslational processing. The processed form is active and the unprocessed form acts as an inhibitor (I kappa B-like), being able to form cytosolic complexes with NF-kappa B, trapping it in the cytoplasm. Complete folding of the region downstream of the GRR repeat precludes processing. Post-translationally, subsequent to MAP3K14-dependent serine phosphorylation, p100 polyubiquitination occurs then triggering its proteasome-dependent processing. Constitutive processing is tightly suppressed by its C-terminal processing inhibitory domain, named PID, which contains the death domain. In terms of processing, ubiquitinated by TRIM55; leading to processing by VCP and subsequent ubiquitin-dependent protein degradation by the proteasome. As to expression, highly expressed in lymph nodes and thymus.

The protein resides in the nucleus. The protein localises to the cytoplasm. Functionally, NF-kappa-B is a pleiotropic transcription factor present in almost all cell types and is the endpoint of a series of signal transduction events that are initiated by a vast array of stimuli related to many biological processes such as inflammation, immunity, differentiation, cell growth, tumorigenesis and apoptosis. NF-kappa-B is a homo- or heterodimeric complex formed by the Rel-like domain-containing proteins RELA/p65, RELB, NFKB1/p105, NFKB1/p50, REL and NFKB2/p52. The dimers bind at kappa-B sites in the DNA of their target genes and the individual dimers have distinct preferences for different kappa-B sites that they can bind with distinguishable affinity and specificity. Different dimer combinations act as transcriptional activators or repressors, respectively. NF-kappa-B is controlled by various mechanisms of post-translational modification and subcellular compartmentalization as well as by interactions with other cofactors or corepressors. NF-kappa-B complexes are held in the cytoplasm in an inactive state complexed with members of the NF-kappa-B inhibitor (I-kappa-B) family. In a conventional activation pathway, I-kappa-B is phosphorylated by I-kappa-B kinases (IKKs) in response to different activators, subsequently degraded thus liberating the active NF-kappa-B complex which translocates to the nucleus. In a non-canonical activation pathway, the MAP3K14-activated CHUK/IKKA homodimer phosphorylates NFKB2/p100 associated with RelB, inducing its proteolytic processing to NFKB2/p52 and the formation of NF-kappa-B RelB-p52 complexes. The NF-kappa-B heterodimeric RelB-p52 complex is a transcriptional activator. The NF-kappa-B p52-p52 homodimer is a transcriptional repressor. NFKB2 appears to have dual functions such as cytoplasmic retention of attached NF-kappa-B proteins by p100 and generation of p52 by a cotranslational processing. The proteasome-mediated process ensures the production of both p52 and p100 and preserves their independent function. p52 binds to the kappa-B consensus sequence 5'-GGRNNYYCC-3', located in the enhancer region of genes involved in immune response and acute phase reactions. p52 and p100 are respectively the minor and major form; the processing of p100 being relatively poor. Isoform p49 is a subunit of the NF-kappa-B protein complex, which stimulates the HIV enhancer in synergy with p65. In concert with RELB, regulates the circadian clock by repressing the transcriptional activator activity of the CLOCK-BMAL1 heterodimer. In Mus musculus (Mouse), this protein is Nuclear factor NF-kappa-B p100 subunit (Nfkb2).